The chain runs to 207 residues: Large ribosomal subunit protein uL4 (207 aa).

Polar residues predominate over residues 45–57; that stretch reads RQGTHSVKNRSTV. The segment at 45 to 77 is disordered; the sequence is RQGTHSVKNRSTVSGGGRKPWRQKGTGNARQGS.

Belongs to the universal ribosomal protein uL4 family. In terms of assembly, part of the 50S ribosomal subunit.

Functionally, one of the primary rRNA binding proteins, this protein initially binds near the 5'-end of the 23S rRNA. It is important during the early stages of 50S assembly. It makes multiple contacts with different domains of the 23S rRNA in the assembled 50S subunit and ribosome. Forms part of the polypeptide exit tunnel. This is Large ribosomal subunit protein uL4 from Oenococcus oeni (strain ATCC BAA-331 / PSU-1).